The following is a 115-amino-acid chain: Ubiquitin-related modifier 1 (115 aa).

Position 115 is a 1-thioglycine (G115). G115 is covalently cross-linked (Glycyl lysine isopeptide (Gly-Lys) (interchain with K-? in acceptor proteins)).

The protein belongs to the URM1 family. In terms of processing, C-terminal thiocarboxylation occurs in 2 steps, it is first acyl-adenylated (-COAMP) via the hesA/moeB/thiF part of UBA4, then thiocarboxylated (-COSH) via the rhodanese domain of UBA4.

The protein localises to the cytoplasm. It participates in tRNA modification; 5-methoxycarbonylmethyl-2-thiouridine-tRNA biosynthesis. In terms of biological role, acts as a sulfur carrier required for 2-thiolation of mcm(5)S(2)U at tRNA wobble positions of cytosolic tRNA(Lys), tRNA(Glu) and tRNA(Gln). Serves as sulfur donor in tRNA 2-thiolation reaction by being thiocarboxylated (-COSH) at its C-terminus by the MOCS3 homolog UBA4. The sulfur is then transferred to tRNA to form 2-thiolation of mcm(5)S(2)U. Prior mcm(5) tRNA modification by the elongator complex is required for 2-thiolation. Also acts as a ubiquitin-like protein (UBL) that is covalently conjugated via an isopeptide bond to lysine residues of target proteins such as AHP1. The thiocarboxylated form serves as substrate for conjugation and oxidative stress specifically induces the formation of UBL-protein conjugates. This chain is Ubiquitin-related modifier 1, found in Coccidioides immitis (strain RS) (Valley fever fungus).